We begin with the raw amino-acid sequence, 157 residues long: Cysteine protease Nivulian-2 (157 aa).

The protein belongs to the intron maturase 2 family. MatK subfamily. As to quaternary structure, monomer. Post-translationally, glycosylated. Accumulates in latex (at protein level).

With respect to regulation, inhibited by HgCl(2), iodoacetamide (IAA) and, to a far lesser extent, by SDS, hydrogen peroxide H(1)O(2), KCl, NaCl, ZnCl(2), AgSO(4), CdCl(2), FeCl(3), PMSF, Pepstatin A and EDTA. Repressed moderately by many organic solvents such as diethyl ether, ethy lacetate, acetophenone, butanol, trichloroethylene, tetrahydrofuran, methanol, chloroform and dichloromethane, and, to a lesser extent, by propanol, benzyl alcohol and chlorobenzene. Functionally, cysteine protease inducing milk clotting by cleaving casein. Exhibits biomedical activities such as wound healing, haemostatic and antibacterial activity, as well as agricultural application in biocontrol process against the infectious management of the root knot nematode Meloidogyne incognita. This is Cysteine protease Nivulian-2 from Euphorbia nivulia (Leafy milk hedge).